The primary structure comprises 140 residues: Alpha-lactalbumin (140 aa).

Residues 1–19 (MMSLLPLLLIGIVLPATQA) form the signal peptide. Residues 20 to 140 (KDYGKCELNQ…CRENLDQWNC (121 aa)) form the C-type lysozyme domain. Cystine bridges form between Cys-25–Cys-140, Cys-47–Cys-131, Cys-80–Cys-96, and Cys-92–Cys-110. Lys-98, Asp-101, Asp-103, Asp-106, and Asp-107 together coordinate Ca(2+).

As to quaternary structure, lactose synthase (LS) is a heterodimer of a catalytic component, beta1,4-galactosyltransferase (beta4Gal-T1) and a regulatory component, alpha-lactalbumin (LA). As to expression, mammary gland specific. Secreted in milk.

It is found in the secreted. Functionally, regulatory subunit of lactose synthase, changes the substrate specificity of galactosyltransferase in the mammary gland making glucose a good acceptor substrate for this enzyme. This enables LS to synthesize lactose, the major carbohydrate component of milk. In other tissues, galactosyltransferase transfers galactose onto the N-acetylglucosamine of the oligosaccharide chains in glycoproteins. The sequence is that of Alpha-lactalbumin (LALBA) from Trichosurus vulpecula (Brush-tailed possum).